The chain runs to 1228 residues: Apical endosomal glycoprotein (1228 aa).

The first 21 residues, 1 to 21 (MCLPSHLLSTWVLFMAAQSLG), serve as a signal peptide directing secretion. The Extracellular portion of the chain corresponds to 23–1159 (TWLPNHCRSP…GEVAAPVSVP (1137 aa)). The region spanning 28–49 (HCRSPIKAVCNFVCDCGDCSDE) is the LDL-receptor class A 1; truncated domain. Positions 65–223 (FTCNFEQDSC…DDVEFRDCGL (159 aa)) constitute an MAM 1 domain. An N-linked (GlcNAc...) asparagine glycan is attached at Asn-204. The 39-residue stretch at 229–267 (RCPLGHHHCQNKACVEPHQLCDGEDNCGDRSDEDPLICS) folds into the LDL-receptor class A 2 domain. 3 disulfide bridges follow: Cys-230-Cys-242, Cys-237-Cys-255, and Cys-249-Cys-266. The 157-residue stretch at 270-426 (MATDFETGLG…DLIMSSHCML (157 aa)) folds into the MAM 2 domain. Residues Asn-290 and Asn-340 are each glycosylated (N-linked (GlcNAc...) asparagine). Positions 457-492 (TCEPGHLSCGDLCVPPEQLCDFQKHCAEGEDEHKCG) constitute an LDL-receptor class A 3 domain. 3 disulfides stabilise this stretch: Cys-458-Cys-469, Cys-465-Cys-482, and Cys-476-Cys-491. MAM domains lie at 492 to 649 (GTTD…DCNP), 659 to 815 (LSCN…PCWA), 817 to 975 (KSCS…PCPQ), and 977 to 1144 (GSCD…QCKQ). Asn-641 carries an N-linked (GlcNAc...) asparagine glycan. Asn-841 is a glycosylation site (N-linked (GlcNAc...) asparagine). The chain crosses the membrane as a helical span at residues 1160–1180 (VAVGGALLFFMFLVLMGLGGW). Over 1181-1228 (HWLQKQHCPGQRSTDAAASGFANILFNADHVTLPESITSNPQSPPDLA) the chain is Cytoplasmic.

The protein localises to the membrane. In terms of biological role, probably involved in the sorting and selective transport of receptors and ligands across polarized epithelia. In Mus musculus (Mouse), this protein is Apical endosomal glycoprotein.